An 885-amino-acid chain; its full sequence is Chitin synthase 3 (885 aa).

The interval 1–59 (MASQYPGHQLDDIPSTNVYRPPPRHEDDEAEHALLHQNSAYQSQYDDPHSRPLTPGQES) is disordered. The span at 23 to 34 (PRHEDDEAEHAL) shows a compositional bias: basic and acidic residues. The span at 36–45 (HQNSAYQSQY) shows a compositional bias: polar residues. The next 6 helical transmembrane spans lie at 565–585 (FFLHIQMIYNIVSVLLSWFSL), 620–640 (IINTILQYLYLAFLLLQFILA), 650–670 (VAYIISFCLFGLIQLYVIVLS), 707–727 (IVIIALAATFGLYFVASFLYM), 735–755 (SFAQYLLLMPSFINILMIYAF), and 837–857 (LVATWIFSNALLAVAITSDSL).

The protein belongs to the chitin synthase family. Class III subfamily.

It localises to the cell membrane. It carries out the reaction [(1-&gt;4)-N-acetyl-beta-D-glucosaminyl](n) + UDP-N-acetyl-alpha-D-glucosamine = [(1-&gt;4)-N-acetyl-beta-D-glucosaminyl](n+1) + UDP + H(+). Its function is as follows. Polymerizes chitin, a structural polymer of the cell wall and septum, by transferring the sugar moiety of UDP-GlcNAc to the non-reducing end of the growing chitin polymer. Is not only stable at different pH, but is also able to tolerate a broad temperature range. With CHS2, plays an important role in virulence. The sequence is that of Chitin synthase 3 from Exophiala dermatitidis (Black yeast-like fungus).